We begin with the raw amino-acid sequence, 35 residues long: IMRDPRFDNIPLILETVNPDIWAEEIAWLKSQAEI.

E15 contacts Zn(2+).

The protein belongs to the AP endonuclease 2 family. Zn(2+) serves as cofactor.

The catalysed reaction is Endonucleolytic cleavage to 5'-phosphooligonucleotide end-products.. Functionally, endonuclease IV plays a role in DNA repair. It cleaves phosphodiester bonds at apurinic or apyrimidinic (AP) sites, generating a 3'-hydroxyl group and a 5'-terminal sugar phosphate. This chain is Probable endonuclease 4 (nfo), found in Yersinia enterocolitica.